The sequence spans 393 residues: Exosome complex component RRP45 (393 aa).

An ARE binding region spans residues 1-268 (MRDTPLSNCE…SEITELINKA (268 aa)).

It belongs to the RNase PH family. In terms of assembly, component of the RNA exosome complex.

Its subcellular location is the cytoplasm. The protein localises to the nucleus. The protein resides in the nucleolus. It is found in the nucleoplasm. In terms of biological role, non-catalytic component of the RNA exosome complex which has 3'-&gt;5' exoribonuclease activity and participates in a multitude of cellular RNA processing and degradation events. In the nucleus, the RNA exosome complex is involved in proper maturation of stable RNA species such as rRNA, snRNA and snoRNA, in the elimination of RNA processing by-products and non-coding 'pervasive' transcripts, such as antisense RNA species and promoter-upstream transcripts (PROMPTs), and of mRNAs with processing defects, thereby limiting or excluding their export to the cytoplasm. In the cytoplasm, the RNA exosome complex is involved in general mRNA turnover and specifically degrades inherently unstable mRNAs containing AU-rich elements (AREs) within their 3' untranslated regions, and in RNA surveillance pathways, preventing translation of aberrant mRNAs. This is Exosome complex component RRP45 from Danio rerio (Zebrafish).